The following is a 134-amino-acid chain: MPTINQLIRKERKKAIKKSKSPALVNCPQRRGVCTRVYTTTPKKPNSALRKVAKVRLTSGFEVISYIPGEGHNLQEHSIVLIRGGRVKDLPGVKYHIIRGALDTAGVQKRNVSRSKYGAKKGKAGAAPTTGKKK.

At Asp-89 the chain carries 3-methylthioaspartic acid. A disordered region spans residues 109–134 (KRNVSRSKYGAKKGKAGAAPTTGKKK). Residues 111–123 (NVSRSKYGAKKGK) are compositionally biased toward basic residues. Residues 124-134 (AGAAPTTGKKK) are compositionally biased toward low complexity.

The protein belongs to the universal ribosomal protein uS12 family. As to quaternary structure, part of the 30S ribosomal subunit. Contacts proteins S8 and S17. May interact with IF1 in the 30S initiation complex.

Functionally, with S4 and S5 plays an important role in translational accuracy. In terms of biological role, interacts with and stabilizes bases of the 16S rRNA that are involved in tRNA selection in the A site and with the mRNA backbone. Located at the interface of the 30S and 50S subunits, it traverses the body of the 30S subunit contacting proteins on the other side and probably holding the rRNA structure together. The combined cluster of proteins S8, S12 and S17 appears to hold together the shoulder and platform of the 30S subunit. This is Small ribosomal subunit protein uS12 from Wolinella succinogenes (strain ATCC 29543 / DSM 1740 / CCUG 13145 / JCM 31913 / LMG 7466 / NCTC 11488 / FDC 602W) (Vibrio succinogenes).